Here is a 333-residue protein sequence, read N- to C-terminus: MSLRSKLSSLREYLTPINHNSNFVTTGEISPEEFVKAGDYLVYKFPTWQWGNDCPKNLQKSFLPPDKQYLVTRHVPSYQRASNYLTGEDKKGANPEEDDEEEEEEDEEGWVKSKKIHKVIDDTHDSQINKGEEINDIDDFIDENAEEQEHDQIGDHELDDDEFDDLDIINDSKNNKLRRFDLYITYSTSYRVPKLYLVGFDSNGIPLLPQQMFEDINSDYKDKTATIENLPVAHNTTSVSIHPCKHSSVMKVLMKHSKLNKKNLQQKDESLSDDLSKLSVNEKKTQDEHSQINNDDKEEEEEGIRVDHYLIIFLKFIASVTPGIEYDYTMDAL.

A disordered region spans residues 81–112 (ASNYLTGEDKKGANPEEDDEEEEEEDEEGWVK). The interval 84–174 (YLTGEDKKGA…DLDIINDSKN (91 aa)) is flexible region. The segment covering 95-108 (PEEDDEEEEEEDEE) has biased composition (acidic residues). The Glycyl thioester intermediate role is filled by C244. Positions 248 to 308 (SVMKVLMKHS…EEEEGIRVDH (61 aa)) are handle region. Residues 278-290 (LSVNEKKTQDEHS) are compositionally biased toward basic and acidic residues. The disordered stretch occupies residues 278–300 (LSVNEKKTQDEHSQINNDDKEEE).

Belongs to the ATG3 family. As to quaternary structure, monomer. Interacts with ATG8 through an intermediate thioester bond through the C-terminal Gly of ATG8. Also interacts with the 40 amino acid C-terminal region of the E1-like ATG7 enzyme. Also interacts with the ATG12-ATG5 conjugate.

Its subcellular location is the cytoplasm. E2 conjugating enzyme required for the cytoplasm to vacuole transport (Cvt) and autophagy. Required for selective autophagic degradation of the nucleus (nucleophagy) as well as for mitophagy which contributes to regulate mitochondrial quantity and quality by eliminating the mitochondria to a basal level to fulfill cellular energy requirements and preventing excess ROS production. Responsible for the E2-like covalent binding of phosphatidylethanolamine to the C-terminal Gly of ATG8. The ATG12-ATG5 conjugate plays a role of an E3 and promotes the transfer of ATG8 from ATG3 to phosphatidylethanolamine (PE). This step is required for the membrane association of ATG8. The formation of the ATG8-phosphatidylethanolamine conjugate is essential for autophagy and for the cytoplasm to vacuole transport (Cvt). The ATG8-PE conjugate mediates tethering between adjacent membranes and stimulates membrane hemifusion, leading to expansion of the autophagosomal membrane during autophagy. This Candida albicans (strain SC5314 / ATCC MYA-2876) (Yeast) protein is Autophagy-related protein 3 (ATG3).